Consider the following 351-residue polypeptide: Tryptophan--tRNA ligase 2 (351 aa).

The segment at 1-24 (MPFVDLEVPTMTTPTPAATPARPR) is disordered. Low complexity predominate over residues 9–24 (PTMTTPTPAATPARPR). Positions 31-39 (PTGALHLGH) match the 'HIGH' region motif. The short motif at 215 to 219 (KMSKS) is the 'KMSKS' region element. Position 218 (K218) interacts with ATP.

The protein belongs to the class-I aminoacyl-tRNA synthetase family. In terms of assembly, homodimer. Forms a complex with nos; one homodimer of trpS2 binds one homodimer of nos.

The enzyme catalyses tRNA(Trp) + L-tryptophan + ATP = L-tryptophyl-tRNA(Trp) + AMP + diphosphate + H(+). Catalyzes the formation of 5'adenyl-Trp and tRNA(Trp) but with 5-fold less activity than TrpRS. Increases the solubility of the nitric oxide synthase oxygenase (nos), as well as its affinity for substrate L-arginine and its nitric-oxide synthase activity. The complex between trpS2 and nos catalyzes the regioselective nitration of tryptophan at the 4-position. The sequence is that of Tryptophan--tRNA ligase 2 (trpS2) from Deinococcus radiodurans (strain ATCC 13939 / DSM 20539 / JCM 16871 / CCUG 27074 / LMG 4051 / NBRC 15346 / NCIMB 9279 / VKM B-1422 / R1).